The following is a 150-amino-acid chain: MIP18 family protein FAM96A (150 aa).

This sequence belongs to the MIP18 family.

Its function is as follows. May play a role in chromosome segregation through establishment of sister chromatid cohesion. This chain is MIP18 family protein FAM96A (fam96A), found in Dictyostelium discoideum (Social amoeba).